We begin with the raw amino-acid sequence, 281 residues long: uncharacterized protein (281 aa).

A run of 4 helical transmembrane segments spans residues Ala8 to Ser28, Leu97 to Gly117, Pro147 to Val167, and Ile210 to Ala230.

It to S.pombe bem46 and yeast YNL320w.

The protein localises to the cell membrane. This is an uncharacterized protein from Mycobacterium tuberculosis (strain CDC 1551 / Oshkosh).